Here is a 213-residue protein sequence, read N- to C-terminus: Orotate phosphoribosyltransferase (213 aa).

Lys26 contacts 5-phospho-alpha-D-ribose 1-diphosphate. Residue 34 to 35 (FF) coordinates orotate. 5-phospho-alpha-D-ribose 1-diphosphate-binding positions include 72–73 (YK), Arg99, Lys100, Lys103, His105, and 124–132 (DDVITAGTA). Positions 128 and 156 each coordinate orotate.

This sequence belongs to the purine/pyrimidine phosphoribosyltransferase family. PyrE subfamily. In terms of assembly, homodimer. Mg(2+) is required as a cofactor.

It catalyses the reaction orotidine 5'-phosphate + diphosphate = orotate + 5-phospho-alpha-D-ribose 1-diphosphate. The protein operates within pyrimidine metabolism; UMP biosynthesis via de novo pathway; UMP from orotate: step 1/2. In terms of biological role, catalyzes the transfer of a ribosyl phosphate group from 5-phosphoribose 1-diphosphate to orotate, leading to the formation of orotidine monophosphate (OMP). The protein is Orotate phosphoribosyltransferase of Cronobacter sakazakii (strain ATCC BAA-894) (Enterobacter sakazakii).